The sequence spans 194 residues: Interleukin-18 (194 aa).

A propeptide spanning residues 1 to 36 is cleaved from the precursor; the sequence is MAAMSEEGSCVNFKEMMFIDNTLYLIPEDNGDLESD.

It belongs to the IL-1 family. As to quaternary structure, forms a ternary complex with ligand-binding receptor subunit IL18R1 and signaling receptor subunit IL18RAP at the plasma membrane. Mature IL18 first binds to IL18R1 forming a low affinity binary complex, which then interacts with IL18RAP to form a high affinity ternary complex that signals inside the cell. Interacts with cargo receptor TMED10; the interaction mediates the translocation from the cytoplasm into the ERGIC (endoplasmic reticulum-Golgi intermediate compartment) and thereby secretion. In terms of processing, the pro-IL-18 precursor is processed by CASP1 to yield its mature, active form. The pro-IL-18 precursor is however not processed by Casp4/Casp11 in rodents. The pro-IL-18 precursor features autoinhibitory interactions between the propeptide and the post-cleavage-site region, preventing recognition by the IL18R1 receptor. Processing by CASP1 induces conformational changes to generate critical receptor-binding sites. The mature form is then secreted and released in the extracellular milieu by passing through the gasdermin-D (GSDMD) pore. In contrast, cleavage by CASP3 inactivates IL18.

It localises to the cytoplasm. The protein resides in the cytosol. It is found in the secreted. Pro-inflammatory cytokine primarily involved in epithelial barrier repair, polarized T-helper 1 (Th1) cell and natural killer (NK) cell immune responses. Upon binding to IL18R1 and IL18RAP, forms a signaling ternary complex which activates NF-kappa-B, triggering synthesis of inflammatory mediators. Synergizes with IL12/interleukin-12 to induce IFNG synthesis from T-helper 1 (Th1) cells and natural killer (NK) cells. Involved in transduction of inflammation downstream of pyroptosis: its mature form is specifically released in the extracellular milieu by passing through the gasdermin-D (GSDMD) pore. The protein is Interleukin-18 (Il18) of Rattus norvegicus (Rat).